The chain runs to 379 residues: Protein RecA (379 aa).

The span at 1–14 (MSNEIKSISSSNSS) shows a compositional bias: low complexity. Residues 1–24 (MSNEIKSISSSNSSCPPNEARSGE) are disordered. 84 to 91 (GPESSGKT) is a binding site for ATP.

The protein belongs to the RecA family.

It is found in the cytoplasm. Can catalyze the hydrolysis of ATP in the presence of single-stranded DNA, the ATP-dependent uptake of single-stranded DNA by duplex DNA, and the ATP-dependent hybridization of homologous single-stranded DNAs. It interacts with LexA causing its activation and leading to its autocatalytic cleavage. The sequence is that of Protein RecA from Prochlorococcus marinus (strain SARG / CCMP1375 / SS120).